The sequence spans 351 residues: UPF0252 protein MJECL39 (351 aa).

A run of 2 helical transmembrane segments spans residues 58–78 (FITF…VWLW) and 91–111 (IIIC…LCGV).

Belongs to the UPF0252 family.

The protein resides in the cell membrane. This chain is UPF0252 protein MJECL39, found in Methanocaldococcus jannaschii (strain ATCC 43067 / DSM 2661 / JAL-1 / JCM 10045 / NBRC 100440) (Methanococcus jannaschii).